The chain runs to 189 residues: dCTP deaminase (189 aa).

DCTP-binding positions include 112-117, 136-138, Gln-157, Tyr-171, and Gln-181; these read KSTYAR and TLE. Glu-138 serves as the catalytic Proton donor/acceptor.

It belongs to the dCTP deaminase family. In terms of assembly, homotrimer.

It carries out the reaction dCTP + H2O + H(+) = dUTP + NH4(+). The protein operates within pyrimidine metabolism; dUMP biosynthesis; dUMP from dCTP (dUTP route): step 1/2. Catalyzes the deamination of dCTP to dUTP. The sequence is that of dCTP deaminase from Burkholderia thailandensis (strain ATCC 700388 / DSM 13276 / CCUG 48851 / CIP 106301 / E264).